A 742-amino-acid polypeptide reads, in one-letter code: Collectin-12 (742 aa).

Residues 1–37 (MKDDFAEEEEVQSFGYKRFGIQEGTQCTKCKNNWALK) lie on the Cytoplasmic side of the membrane. The chain crosses the membrane as a helical; Signal-anchor for type II membrane protein span at residues 38–58 (FSIILLYILCVLLTITIAILG). The Extracellular portion of the chain corresponds to 59–742 (YKVVEKMDNV…DMDKEQIFGV (684 aa)). 2 coiled-coil regions span residues 71-101 (GLETSHRRYTEKLTEVESDLKKLDDQAGQKA) and 271-334 (NNSA…QLEE). Residues 439-605 (TILQGPPGPR…SEPTSVPEAN (167 aa)) form a disordered region. Collagen-like domains lie at 467–526 (GQKG…SGDP) and 527–586 (GPPG…PGPP). Positions 475 to 492 (PGPPGPAGEKGPPGPIGP) are enriched in pro residues. 2 stretches are compositionally biased toward low complexity: residues 502–522 (RGSPGSKGQRGSPGKTGLPGP) and 532–556 (QGKDGPQGPQGPPGFQGLQGTVGEP). Positions 571–589 (PGLPGPKGPPGPPGPPGPG) are enriched in pro residues. Intrachain disulfides connect cysteine 607–cysteine 618, cysteine 635–cysteine 730, and cysteine 708–cysteine 722. The 118-residue stretch at 614-731 (YTEKCYYFSI…CEDVNNFICE (118 aa)) folds into the C-type lectin domain. Ca(2+) is bound by residues isoleucine 644, asparagine 646, glutamate 650, aspartate 670, and glutamate 674. 3 residues coordinate a carbohydrate: lysine 691, glutamine 694, and aspartate 696. Ca(2+) is bound by residues glutamine 694, aspartate 696, asparagine 697, glutamate 706, aspartate 707, asparagine 718, aspartate 719, and glutamate 731. Glutamate 706 serves as a coordination point for a carbohydrate. Positions 718 and 719 each coordinate a carbohydrate.

Widely expressed.

It is found in the membrane. Scavenger receptor that displays several functions associated with host defense. Binds to carbohydrates. In Gallus gallus (Chicken), this protein is Collectin-12 (COLEC12).